A 203-amino-acid polypeptide reads, in one-letter code: Large ribosomal subunit protein uL18 (203 aa).

It belongs to the universal ribosomal protein uL18 family. As to quaternary structure, part of the 50S ribosomal subunit. Contacts the 5S and 23S rRNAs.

In terms of biological role, this is one of the proteins that bind and probably mediate the attachment of the 5S RNA into the large ribosomal subunit, where it forms part of the central protuberance. The sequence is that of Large ribosomal subunit protein uL18 from Pyrococcus horikoshii (strain ATCC 700860 / DSM 12428 / JCM 9974 / NBRC 100139 / OT-3).